Here is a 246-residue protein sequence, read N- to C-terminus: Polyhedrin (246 aa).

The protein belongs to the polyhedrin family.

Functionally, major component of the virus occlusion bodies, which are large proteinaceous structures (polyhedra), that protect the virus from the outside environment for extended periods until they are ingested by insect larvae. This is Polyhedrin (PH) from Heliothis zea nuclear polyhedrosis virus (HzSNPV).